Consider the following 191-residue polypeptide: UMP-CMP kinase 2 (191 aa).

Residue 12-17 (GSGKGT) participates in ATP binding. The tract at residues 32–62 (SAGDLLRAERQREGSEFGALIESHIKNGSIV) is NMP. A ribonucleoside 5'-phosphate is bound by residues Arg-38, 60-62 (SIV), and 88-91 (GFPR). Residue Asn-95 participates in CMP binding. An LID region spans residues 128-136 (NRGQGRTDD). ATP is bound at residue Arg-129. Positions 133 and 144 each coordinate a ribonucleoside 5'-phosphate. Residue Arg-172 coordinates ATP.

The protein belongs to the adenylate kinase family. UMP-CMP kinase subfamily. As to quaternary structure, monomer. Requires Mg(2+) as cofactor. In terms of tissue distribution, expressed in neurons and the pharynx.

The protein localises to the cytoplasm. It is found in the nucleus. It carries out the reaction CMP + ATP = CDP + ADP. It catalyses the reaction dCMP + ATP = dCDP + ADP. The catalysed reaction is UMP + ATP = UDP + ADP. Its function is as follows. Catalyzes the phosphorylation of pyrimidine nucleoside monophosphates at the expense of ATP. Plays an important role in de novo pyrimidine nucleotide biosynthesis. Has preference for UMP and CMP as phosphate acceptors. This Caenorhabditis elegans protein is UMP-CMP kinase 2.